A 1284-amino-acid polypeptide reads, in one-letter code: Kinesin-like protein KIN-4C (1284 aa).

Positions 12–364 (SVKVVVNIRP…LKYANRARNI (353 aa)) constitute a Kinesin motor domain. 91–98 (GQTGSGKT) provides a ligand contact to ATP. Coiled-coil stretches lie at residues 407–445 (SAAL…EQLA), 561–711 (RDHS…QFRS), and 911–950 (MCKE…NMLL). 2 disordered regions span residues 1040 to 1070 (RRQT…SQEK) and 1158 to 1284 (MSEK…NHLR). Residues 1043–1070 (TVSSHLNPNPGSGTTQKSAKSEMASQEK) are compositionally biased toward polar residues. Basic and acidic residues-rich tracts occupy residues 1158-1172 (MSEK…RKPL) and 1275-1284 (NANEKENHLR).

This sequence belongs to the TRAFAC class myosin-kinesin ATPase superfamily. Kinesin family. KIN-4 subfamily. As to quaternary structure, homodimer.

Its function is as follows. Microtubule-dependent motor protein involved in the control of the oriented deposition of cellulose microfibrils. In Oryza sativa subsp. japonica (Rice), this protein is Kinesin-like protein KIN-4C.